The sequence spans 90 residues: MIKNPFISVISQEEKEENKGSVEYQILSFTNKIRRLTSHLELHRKDFLSQRGLRKILGKRQRLLAYLSKKNRVRYKELISQLDIREPKTR.

It belongs to the universal ribosomal protein uS15 family. In terms of assembly, part of the 30S ribosomal subunit.

The protein resides in the plastid. It localises to the chloroplast. This chain is Small ribosomal subunit protein uS15c (rps15), found in Nandina domestica (Heavenly bamboo).